We begin with the raw amino-acid sequence, 294 residues long: Elongation factor Ts (294 aa).

The interval 81 to 84 is involved in Mg(2+) ion dislocation from EF-Tu; the sequence is TDFV.

This sequence belongs to the EF-Ts family.

The protein resides in the cytoplasm. Functionally, associates with the EF-Tu.GDP complex and induces the exchange of GDP to GTP. It remains bound to the aminoacyl-tRNA.EF-Tu.GTP complex up to the GTP hydrolysis stage on the ribosome. The polypeptide is Elongation factor Ts (Hydrogenovibrio crunogenus (strain DSM 25203 / XCL-2) (Thiomicrospira crunogena)).